Consider the following 278-residue polypeptide: MKRKMKLSLIENSVSRKTTFTKRKKGMTKKLTELVTLCGVEACAVVYSPFNSIPEAWPSREGVEDVVSKFMELSVLDRTKKMVDQETFISQRIAKEKEQLQKLRDENHNSQIRELMFGCLKGETNVYNLDGRDLQDLSLYIDKYLNGLTRRIEILIENGESSSSLPLPIVANAAAPVGFDGPMFQYHNQNQQKPVQFQYQALYDFYDQIPKKIHGFNMNMNKDSNQSMVLDLNQNLNDGEDEGIPCMDNNNYHPEIDCLATVTTAPTDVCAPNITNDL.

The 60-residue stretch at 1 to 60 (MKRKMKLSLIENSVSRKTTFTKRKKGMTKKLTELVTLCGVEACAVVYSPFNSIPEAWPSR) folds into the MADS-box domain.

As to quaternary structure, interacts with AGL61/DIANA and AGL62. Male gametophyte, embryo and endosperm.

Its subcellular location is the nucleus. Probable transcription factor involved in the development of gametophytes and seeds. This chain is MADS-box transcription factor PHERES 2 (PHE2), found in Arabidopsis thaliana (Mouse-ear cress).